A 168-amino-acid chain; its full sequence is Endoribonuclease YbeY (168 aa).

The Zn(2+) site is built by histidine 126, histidine 130, and histidine 136.

The protein belongs to the endoribonuclease YbeY family. Requires Zn(2+) as cofactor.

It localises to the cytoplasm. In terms of biological role, single strand-specific metallo-endoribonuclease involved in late-stage 70S ribosome quality control and in maturation of the 3' terminus of the 16S rRNA. The chain is Endoribonuclease YbeY from Rhizobium meliloti (strain 1021) (Ensifer meliloti).